The chain runs to 1659 residues: eIF-2-alpha kinase GCN2 (1659 aa).

The 112-residue stretch at 17 to 128 (NELEAIRSIY…SFTQEKLDEF (112 aa)) folds into the RWD domain. Positions 149–170 (KEQLEKEEREKQQETIKKRSDE) are disordered. Protein kinase domains are found at residues 256-527 (LVKP…MKFL) and 599-981 (FEEI…SGWL). Residues 605–613 (LGQGAFGQV) and K628 contribute to the ATP site. Disordered regions lie at residues 671–691 (NVFE…DFEE) and 727–768 (FENS…VPRR). The residue at position 761 (S761) is a Phosphoserine. D835 serves as the catalytic Proton acceptor. Phosphothreonine; by autocatalysis is present on residues T882 and T887. The histidyl-tRNA synthetase-like stretch occupies residues 999-1519 (NPSSPWQQQV…EFKRWDENSS (521 aa)).

It belongs to the protein kinase superfamily. Ser/Thr protein kinase family. GCN2 subfamily. In terms of assembly, homodimer; homodimerization is important for kinase activation by uncharged tRNAs. Interacts (via N-terminal RWD domain) with GCN1 (via N- and C-terminus); this interaction stimulates GCN2 kinase activity in a GCN20-dependent manner in response to amino acid starvation. Interacts (via N-terminus) with the GCN1-GCN20 complex on translating ribosomes in amino acid-starved cells; GCN1 may bind near the ribosomal A-site and promotes the transfer of uncharged tRNAs from the A-site to the tRNA-binding domain in GCN2 for its subsequent kinase activation, and hence allowing GCN4 translational activation and derepression of amino acid biosynthetic genes. Interacts (via C-terminus) with TIF11; this interaction is direct, occurs in amino acid-repleted cells, may be stabilized in a ribosome-dependent manner, reduces GCN2-mediated eIF-2-alpha phosphorylation but not GCN2 autophosphorylation and is lost in amino acid-starved cells and by uncharged tRNAs. Associates (via C-terminus) with ribosomes. Mg(2+) serves as cofactor. Autophosphorylated, autophosphorylation on Thr-882 and Thr-887 increases kinase activity.

It localises to the cytoplasm. It carries out the reaction L-seryl-[protein] + ATP = O-phospho-L-seryl-[protein] + ADP + H(+). The catalysed reaction is L-threonyl-[protein] + ATP = O-phospho-L-threonyl-[protein] + ADP + H(+). Its activity is regulated as follows. The integrated stress response (ISR) is activated in response to conditions that promote ribosome collisions: GCN1, which acts as a ribosome collision sensor, activates GCN2. The RQC pathway and the integrated stress response (ISR) antagonize each other: HEL2 prevents the activation of GCN2, while GCN2 suppresses RQC activation. Ribosome stalling-induced integrated stress response prefers ribosomes with empty A sites. The kinase activity is stimulated upon binding to uncharged tRNAs. Metabolic-stress sensing protein kinase that phosphorylates the alpha subunit of eukaryotic translation initiation factor 2 (eIF-2-alpha/SUI2) on 'Ser-52' in response to low amino acid, carbon, or purine availability. Required for adapatation to nutrient starvation by acting as a key component of the integrated stress response (ISR), by which cells alter their translational and transcriptional output in response to starvation. Converts phosphorylated eIF-2-alpha/SUI2 either to a competitive inhibitor of translation initiation factor eIF-2B, leading to a global protein synthesis repression, and thus to a reduced overall utilization of amino acids, or to a translational initiation activation of specific mRNAs, such as the transcriptional activator GCN4, and hence allowing GCN4-mediated reprogramming of transcription to alleviate nutrient depletion. Binds uncharged tRNAs. Binds to aminoacylated tRNA(Phe) less tightly than to deacylated tRNA(Phe). Binds to double-stranded RNA. This chain is eIF-2-alpha kinase GCN2, found in Saccharomyces cerevisiae (strain ATCC 204508 / S288c) (Baker's yeast).